The chain runs to 551 residues: Membrane protein insertase YidC (551 aa).

Residues 3-23 form a helical membrane-spanning segment; it reads ANHIRILLLVTIAIMLISLMG. Residues 30–43 are compositionally biased toward low complexity; that stretch reads PSNSSQSQTTQTQQ. The segment at 30–61 is disordered; the sequence is PSNSSQSQTTQTQQDNSHYNSDTPATTNVSTS. The segment covering 44-61 has biased composition (polar residues); that stretch reads DNSHYNSDTPATTNVSTS. 3 consecutive transmembrane segments (helical) span residues 361 to 381, 431 to 451, and 504 to 524; these read LVGN…LIFY, LSGC…YWVL, and IMMF…SGLV.

This sequence belongs to the OXA1/ALB3/YidC family. Type 1 subfamily. Interacts with the Sec translocase complex via SecD. Specifically interacts with transmembrane segments of nascent integral membrane proteins during membrane integration.

Its subcellular location is the cell inner membrane. Functionally, required for the insertion and/or proper folding and/or complex formation of integral membrane proteins into the membrane. Involved in integration of membrane proteins that insert both dependently and independently of the Sec translocase complex, as well as at least some lipoproteins. Aids folding of multispanning membrane proteins. This chain is Membrane protein insertase YidC, found in Francisella philomiragia subsp. philomiragia (strain ATCC 25017 / CCUG 19701 / FSC 153 / O#319-036).